A 1168-amino-acid chain; its full sequence is Probable serine/threonine protein kinase IRE (1168 aa).

2 disordered regions span residues 1–165 (MSTT…GVES) and 377–444 (EKQN…KIQP). Over residues 16-25 (PTTISTPTST) the composition is skewed to low complexity. Basic and acidic residues-rich tracts occupy residues 39-54 (RHSD…KTDE) and 107-130 (QDDK…DARA). Composition is skewed to polar residues over residues 146 to 163 (QWSQ…NPGV) and 401 to 414 (TARS…NFRM). The segment at 488-507 (CRICEVEIPVVHVEEHSRIC) adopts a C2H2-type; atypical zinc-finger fold. 3 disordered regions span residues 546-566 (PRAV…DLDE), 602-622 (GTKD…PRNS), and 717-744 (SSNA…LNPR). The region spanning 754 to 1043 (FEIIKPISRG…AGEVKQHHFF (290 aa)) is the Protein kinase domain. Residues 760-768 (ISRGAFGRV) and Lys783 contribute to the ATP site. Asp877 acts as the Proton acceptor in catalysis. In terms of domain architecture, AGC-kinase C-terminal spans 1044–1144 (KDINWDTLAR…KNLSQLASIN (101 aa)).

This sequence belongs to the protein kinase superfamily. AGC Ser/Thr protein kinase family. As to expression, highly expressed in roots, elongating root hair cells and pollen grains.

It catalyses the reaction L-seryl-[protein] + ATP = O-phospho-L-seryl-[protein] + ADP + H(+). It carries out the reaction L-threonyl-[protein] + ATP = O-phospho-L-threonyl-[protein] + ADP + H(+). In terms of biological role, modulates root tip growth. May play a common role in the tip growth of plant cells. This Arabidopsis thaliana (Mouse-ear cress) protein is Probable serine/threonine protein kinase IRE.